A 65-amino-acid polypeptide reads, in one-letter code: Toxin NaTx-22 (65 aa).

Residues 1–64 (KDGYPVIKTT…TYPIPGKTCK (64 aa)) enclose the LCN-type CS-alpha/beta domain. Disulfide bonds link Cys-12/Cys-63, Cys-16/Cys-39, Cys-25/Cys-44, and Cys-29/Cys-46.

It belongs to the long (4 C-C) scorpion toxin superfamily. Sodium channel inhibitor family. As to expression, expressed by the venom gland.

It is found in the secreted. Its function is as follows. Probable sodium channel inhibitor. The polypeptide is Toxin NaTx-22 (Centruroides sculpturatus (Arizona bark scorpion)).